Reading from the N-terminus, the 491-residue chain is Glutamyl-tRNA(Gln) amidotransferase subunit A (491 aa).

Active-site charge relay system residues include lysine 79 and serine 154. Catalysis depends on serine 178, which acts as the Acyl-ester intermediate.

Belongs to the amidase family. GatA subfamily. In terms of assembly, heterotrimer of A, B and C subunits.

The catalysed reaction is L-glutamyl-tRNA(Gln) + L-glutamine + ATP + H2O = L-glutaminyl-tRNA(Gln) + L-glutamate + ADP + phosphate + H(+). In terms of biological role, allows the formation of correctly charged Gln-tRNA(Gln) through the transamidation of misacylated Glu-tRNA(Gln) in organisms which lack glutaminyl-tRNA synthetase. The reaction takes place in the presence of glutamine and ATP through an activated gamma-phospho-Glu-tRNA(Gln). This Natranaerobius thermophilus (strain ATCC BAA-1301 / DSM 18059 / JW/NM-WN-LF) protein is Glutamyl-tRNA(Gln) amidotransferase subunit A.